We begin with the raw amino-acid sequence, 935 residues long: Mannosyltransferase regulator 14 (935 aa).

The Cytoplasmic portion of the chain corresponds to 1–21 (MMLSLRRFSMYVLRSLRLHFK). The helical; Signal-anchor for type II membrane protein transmembrane segment at 22–42 (KIIITLLTIQLLFITIFVLGG) threads the bilayer. The Lumenal segment spans residues 43–935 (RSSIIDGNWK…NNIFGSDQKY (893 aa)). A DXD motif is present at residues 498-500 (DHD).

It belongs to the MNN4 family.

It localises to the golgi apparatus membrane. Plays a role in N-glycan mannosylphosphorylation and has partially redundant function with MNN4. The protein is Mannosyltransferase regulator 14 of Saccharomyces cerevisiae (strain ATCC 204508 / S288c) (Baker's yeast).